The following is a 256-amino-acid chain: tRNA-cytidine(32) 2-sulfurtransferase (256 aa).

The PP-loop motif motif lies at 35–40 (SGGKDS). Cysteine 110, cysteine 113, and cysteine 201 together coordinate [4Fe-4S] cluster.

The protein belongs to the TtcA family. Homodimer. The cofactor is Mg(2+). [4Fe-4S] cluster is required as a cofactor.

The protein resides in the cytoplasm. It catalyses the reaction cytidine(32) in tRNA + S-sulfanyl-L-cysteinyl-[cysteine desulfurase] + AH2 + ATP = 2-thiocytidine(32) in tRNA + L-cysteinyl-[cysteine desulfurase] + A + AMP + diphosphate + H(+). It participates in tRNA modification. Catalyzes the ATP-dependent 2-thiolation of cytidine in position 32 of tRNA, to form 2-thiocytidine (s(2)C32). The sulfur atoms are provided by the cysteine/cysteine desulfurase (IscS) system. This chain is tRNA-cytidine(32) 2-sulfurtransferase, found in Coxiella burnetii (strain RSA 493 / Nine Mile phase I).